The chain runs to 433 residues: MRQLASILLLAFVVGSVSAFYSPSDGVVELTPSNFDREVLKDDAIWVVEFYAPWCGHCQSLVPEYKKLAKALKGVVKVGSVNADADSTLSGQFGVRGFPTIKIFGANKKSPTDYNGQRTAKAIAEAALAEVKKKVQGVLGGGGGSSSGGSGSSSGDDVIELTEDNFDKLVLNSDDIWLVEFFAPWCGHCKNLAPEWAKAAKELKGKVKLGALDATAHQSKAAEYNVRGYPTIKFFPAGSKRASDAQEYDGGRTASDIVSWASDKHVANVPAPELIEIINESTFETACEGKPLCVVSVLPHILDCDAKCRNKFLDTLRTLGEKFKQKQWGWAWAEGGQQLALEESLEVGGFGYPAMAVVNFKKMKFSVLKGSFSKDGINEFLRDISYGRGHTAPVRGAKKPAIVSVDPWDGKDGQLPTEEDIDLSDIDLDKDEL.

Residues 1-19 form the signal peptide; the sequence is MRQLASILLLAFVVGSVSA. 2 consecutive Thioredoxin domains span residues 20–119 and 120–267; these read FYSP…GQRT and AKAI…KHVA. Catalysis depends on nucleophile residues Cys55, Cys58, Cys186, and Cys189. 2 disulfides stabilise this stretch: Cys55–Cys58 and Cys186–Cys189. Asn279 carries an N-linked (GlcNAc...) asparagine glycan. The interval 405–433 is disordered; sequence VDPWDGKDGQLPTEEDIDLSDIDLDKDEL. Acidic residues predominate over residues 417 to 433; sequence TEEDIDLSDIDLDKDEL. The Prevents secretion from ER signature appears at 430–433; the sequence is KDEL.

The protein belongs to the protein disulfide isomerase family. In terms of assembly, interacts with Drpr (via extracellular region). As to expression, in the blastoderm embryo, expression starts at the anterior and posterior poles and later appears as broad stripes. Following gastrulation, expressed in midline precursor cells and the posterior head with low levels present throughout the embryo. During germ band extension, weak dorsoventral stripes of expression are evident. Midline expression begins and is retained throughout embryogenesis in clusters of cells in each segment in the central nervous system. At least some of the midline expression occurs in VUM neurons.

The protein localises to the endoplasmic reticulum lumen. The protein resides in the cell surface. It carries out the reaction Catalyzes the rearrangement of -S-S- bonds in proteins.. Functionally, binds to both apoptotic cells and phagocytes and promotes Drpr-dependent phagocytosis of apoptotic cells. The protein is Protein disulfide-isomerase A6 homolog of Drosophila melanogaster (Fruit fly).